The chain runs to 208 residues: Probable nicotinate-nucleotide adenylyltransferase (208 aa).

The protein belongs to the NadD family.

The catalysed reaction is nicotinate beta-D-ribonucleotide + ATP + H(+) = deamido-NAD(+) + diphosphate. The protein operates within cofactor biosynthesis; NAD(+) biosynthesis; deamido-NAD(+) from nicotinate D-ribonucleotide: step 1/1. In terms of biological role, catalyzes the reversible adenylation of nicotinate mononucleotide (NaMN) to nicotinic acid adenine dinucleotide (NaAD). This is Probable nicotinate-nucleotide adenylyltransferase from Symbiobacterium thermophilum (strain DSM 24528 / JCM 14929 / IAM 14863 / T).